Consider the following 634-residue polypeptide: SPARC-like protein 1 (634 aa).

Residues 1 to 16 (MKAVLLLLYALGIAAA) form the signal peptide. The disordered stretch occupies residues 50–335 (ADIEKHPNHK…DDSKHGASDD (286 aa)). The span at 51–62 (DIEKHPNHKAEK) shows a compositional bias: basic and acidic residues. Ser68, Ser76, and Ser84 each carry phosphoserine. The segment covering 73–83 (HEQSTEQDKTY) has biased composition (basic and acidic residues). The segment covering 89-99 (LKDEEDGDGDL) has biased composition (acidic residues). The segment covering 131–144 (TVSTPFVDSDQPAN) has biased composition (polar residues). N-linked (GlcNAc...) asparagine glycosylation is present at Asn144. 2 positions are modified to phosphoserine: Ser151 and Ser159. Acidic residues-rich tracts occupy residues 189–198 (EKEEEEDPED) and 205–214 (NQEEEKEPPE). The span at 233–258 (QESSQPTQISKTKNDFEQGSQGQEGD) shows a compositional bias: polar residues. Ser259 is subject to Phosphoserine. Basic and acidic residues-rich tracts occupy residues 263–276 (GEDK…HLPH) and 292–303 (GNRKDTDEEKAV). Ser333 and Ser340 each carry phosphoserine. Positions 360 to 398 (EETPDESENRSEAGDNQGAKKAESSPNAEPSDEGNSRGH) are disordered. A compositionally biased stretch (basic and acidic residues) spans 366-382 (SENRSEAGDNQGAKKAE). N-linked (GlcNAc...) asparagine glycosylation occurs at Asn368. Ser370 and Ser390 each carry phosphoserine. Positions 402–424 (SCMNFQCKRGHTCKTDQHGKPHC) constitute a Follistatin-like domain. 7 disulfides stabilise this stretch: Cys403-Cys414, Cys408-Cys424, Cys426-Cys460, Cys432-Cys453, Cys442-Cys479, Cys485-Cys596, and Cys604-Cys620. Residues 420 to 481 (GKPHCVCQDP…QLDYFGACKS (62 aa)) enclose the Kazal-like domain. An N-linked (GlcNAc...) asparagine glycan is attached at Asn446. Residues 592-627 (PMEHCITRFFEECDPNKDKHITLKEWGHCFGIKEED) form the EF-hand domain. Residues Asp605, Asn607, Asp609, His611, and Glu616 each contribute to the Ca(2+) site.

Belongs to the SPARC family. In terms of tissue distribution, expressed in many types of neurons in the brain.

The protein localises to the secreted. The protein resides in the extracellular space. It localises to the extracellular matrix. The chain is SPARC-like protein 1 (Sparcl1) from Rattus norvegicus (Rat).